A 219-amino-acid chain; its full sequence is Probable GTP-binding protein EngB (219 aa).

One can recognise an EngB-type G domain in the interval 24 to 207 (VQPEIAFAGR…HELIESWVRP (184 aa)). GTP is bound by residues 32 to 39 (GRSNAGKS), 59 to 63 (GRTQH), 81 to 84 (DLPG), 148 to 151 (TKCD), and 186 to 188 (FSA). 2 residues coordinate Mg(2+): serine 39 and threonine 61.

This sequence belongs to the TRAFAC class TrmE-Era-EngA-EngB-Septin-like GTPase superfamily. EngB GTPase family. Mg(2+) is required as a cofactor.

Functionally, necessary for normal cell division and for the maintenance of normal septation. The polypeptide is Probable GTP-binding protein EngB (Burkholderia ambifaria (strain MC40-6)).